Here is a 420-residue protein sequence, read N- to C-terminus: rRNA methyltransferase 3, mitochondrial (420 aa).

The N-terminal 40 residues, 1–40 (MAALVRPARFVVRPLLQVVQAWDLDARRWVRALRRSPVKV), are a transit peptide targeting the mitochondrion. Positions 49 to 88 (EQKRAPGKQPRKAPSEASAQEQREKQPLEESASRAPSTWE) are disordered. Basic and acidic residues predominate over residues 69 to 80 (EQREKQPLEESA). The S-adenosyl-L-methionine site is built by Gly356, Ile380, and Leu389.

It belongs to the class IV-like SAM-binding methyltransferase superfamily. RNA methyltransferase TrmH family. In terms of tissue distribution, expressed at same level in normal liver and hepatocarcinoma.

The protein resides in the mitochondrion. The catalysed reaction is guanosine(1370) in 16S rRNA + S-adenosyl-L-methionine = 2'-O-methylguanosine(1370) in 16S rRNA + S-adenosyl-L-homocysteine + H(+). Functionally, S-adenosyl-L-methionine-dependent 2'-O-ribose methyltransferase that catalyzes the formation of 2'-O-methylguanosine at position 1370 (Gm1370) in the 16S mitochondrial large subunit ribosomal RNA (mtLSU rRNA), a conserved modification in the peptidyl transferase domain of the mtLSU rRNA. Also required for formation of 2'-O-methyluridine at position 1369 (Um1369) mediated by MRM2. The polypeptide is rRNA methyltransferase 3, mitochondrial (Homo sapiens (Human)).